Here is a 92-residue protein sequence, read N- to C-terminus: Antifungal protein B (92 aa).

The signal sequence occupies residues 1–18; it reads MQITSIAIVFFAAMGAVA. Residues 19–34 constitute a propeptide that is removed on maturation; sequence NPIARESDDLDARDVQ. 3 disulfide bridges follow: cysteine 42/cysteine 70, cysteine 49/cysteine 77, and cysteine 62/cysteine 88.

It is found in the secreted. Its subcellular location is the host cytoplasm. Functionally, antifungal protein that acts as an inhibitor of growth of human pathogenic molds and yeasts. Is active against the model organism Neurospora crassa, the opportunistic human pathogens Aspergillus fumigatus, Trichophyton rubrum, and Aspergillus terreus. Provokes a reduction of the incidence of infections caused by Penicillium digitatum and Penicillium italicum in oranges and by Penicillium expansum in apples. Low doses of pafB have self-inhibition activity. Also shows activity against the model yeast Saccaromyces cerevisiae and the opportunistic human pathogen Candida albicans. No antibacterial activity is observed on the Gram-negative Escherichia coli and the Gram-positive Bacillus subtilis. Finally, also shows anti-viral activity in a model of HCoV 229E infected L132 cells. In Penicillium chrysogenum (Penicillium notatum), this protein is Antifungal protein B.